A 456-amino-acid chain; its full sequence is Phosphomethylpyrimidine synthase (456 aa).

Substrate-binding positions include Asn-80, Met-109, Tyr-139, His-175, 195–197, 236–239, and Glu-275; these read SRG and DSLR. His-279 is a binding site for Zn(2+). Tyr-302 contributes to the substrate binding site. His-343 is a Zn(2+) binding site. The [4Fe-4S] cluster site is built by Cys-423, Cys-426, and Cys-431.

It belongs to the ThiC family. Requires [4Fe-4S] cluster as cofactor.

It carries out the reaction 5-amino-1-(5-phospho-beta-D-ribosyl)imidazole + S-adenosyl-L-methionine = 4-amino-2-methyl-5-(phosphooxymethyl)pyrimidine + CO + 5'-deoxyadenosine + formate + L-methionine + 3 H(+). It functions in the pathway cofactor biosynthesis; thiamine diphosphate biosynthesis. Functionally, catalyzes the synthesis of the hydroxymethylpyrimidine phosphate (HMP-P) moiety of thiamine from aminoimidazole ribotide (AIR) in a radical S-adenosyl-L-methionine (SAM)-dependent reaction. In Prochlorococcus marinus (strain MIT 9215), this protein is Phosphomethylpyrimidine synthase.